The chain runs to 131 residues: Large ribosomal subunit protein bL12 (131 aa).

Belongs to the bacterial ribosomal protein bL12 family. Homodimer. Part of the ribosomal stalk of the 50S ribosomal subunit. Forms a multimeric L10(L12)X complex, where L10 forms an elongated spine to which 2 to 4 L12 dimers bind in a sequential fashion. Binds GTP-bound translation factors.

Functionally, forms part of the ribosomal stalk which helps the ribosome interact with GTP-bound translation factors. Is thus essential for accurate translation. The sequence is that of Large ribosomal subunit protein bL12 from Prochlorococcus marinus (strain MIT 9301).